The following is a 173-amino-acid chain: Co-chaperone protein HscB homolog (173 aa).

Positions 5 to 77 constitute a J domain; sequence CHFALFELQP…PKRARYLLAM (73 aa).

It belongs to the HscB family. As to quaternary structure, interacts with HscA and stimulates its ATPase activity.

Co-chaperone involved in the maturation of iron-sulfur cluster-containing proteins. Seems to help targeting proteins to be folded toward HscA. In Pseudomonas fluorescens (strain SBW25), this protein is Co-chaperone protein HscB homolog.